Consider the following 58-residue polypeptide: Single-pass membrane and coiled-coil domain-containing protein 4 homolog (58 aa).

A coiled-coil region spans residues M1 to T31. Residues T31–K51 form a helical membrane-spanning segment.

It belongs to the SMCO4 family.

Its subcellular location is the membrane. In Drosophila melanogaster (Fruit fly), this protein is Single-pass membrane and coiled-coil domain-containing protein 4 homolog.